The chain runs to 92 residues: Defensin (92 aa).

Positions 1-20 are cleaved as a signal peptide; the sequence is MKFFVLVAIAFALLACVAQA. The propeptide occupies 21 to 52; sequence QPVSDVDPIPEDHVLVHEDAHQEVLQHSRQKR. 3 disulfide bridges follow: Cys55-Cys82, Cys68-Cys88, and Cys72-Cys90.

Belongs to the invertebrate defensin family. Type 1 subfamily. As to expression, hemolymph (at protein level).

The protein localises to the secreted. Functionally, responsible for the anti Gram-positive activity of immune hemolymph. Expressed in the absence of immune challenge during metamorphosis. The sequence is that of Defensin (Def) from Drosophila melanogaster (Fruit fly).